The chain runs to 404 residues: Cysteine desulfurase IscS (404 aa).

Residues 75–76, asparagine 155, glutamine 183, and 203–205 contribute to the pyridoxal 5'-phosphate site; these read AT and SAH. N6-(pyridoxal phosphate)lysine is present on lysine 206. Pyridoxal 5'-phosphate is bound at residue threonine 243. Cysteine 328 (cysteine persulfide intermediate) is an active-site residue. [2Fe-2S] cluster is bound at residue cysteine 328.

The protein belongs to the class-V pyridoxal-phosphate-dependent aminotransferase family. NifS/IscS subfamily. In terms of assembly, homodimer. Forms a heterotetramer with IscU, interacts with other sulfur acceptors. The cofactor is pyridoxal 5'-phosphate.

The protein localises to the cytoplasm. The catalysed reaction is (sulfur carrier)-H + L-cysteine = (sulfur carrier)-SH + L-alanine. It functions in the pathway cofactor biosynthesis; iron-sulfur cluster biosynthesis. Functionally, master enzyme that delivers sulfur to a number of partners involved in Fe-S cluster assembly, tRNA modification or cofactor biosynthesis. Catalyzes the removal of elemental sulfur atoms from cysteine to produce alanine. Functions as a sulfur delivery protein for Fe-S cluster synthesis onto IscU, an Fe-S scaffold assembly protein, as well as other S acceptor proteins. The sequence is that of Cysteine desulfurase IscS from Pseudomonas syringae pv. tomato (strain ATCC BAA-871 / DC3000).